We begin with the raw amino-acid sequence, 488 residues long: Histone deacetylase 2 (488 aa).

The interval 9–322 is histone deacetylase; the sequence is KKKVCYYYDG…WTYETAVALD (314 aa). 1D-myo-inositol 1,4,5,6-tetrakisphosphate is bound by residues G28 and K32. K75 carries the N6-acetyllysine; alternate modification. K75 is covalently cross-linked (Glycyl lysine isopeptide (Lys-Gly) (interchain with G-Cter in SUMO2); alternate). The active site involves H142. Ca(2+)-binding residues include D175, D177, H179, F188, T191, V194, S198, and F199. Zn(2+) is bound by residues D177 and H179. At K221 the chain carries N6-acetyllysine. Residue Y223 participates in Ca(2+) binding. C262 carries the post-translational modification S-nitrosocysteine. D265 lines the Zn(2+) pocket. Position 271 (R271) interacts with 1D-myo-inositol 1,4,5,6-tetrakisphosphate. S-nitrosocysteine is present on C274. The interval 389–488 is disordered; it reads AVHEDSGDED…GAKSEQLSNP (100 aa). Phosphoserine occurs at positions 394, 407, 422, and 424. A compositionally biased stretch (basic and acidic residues) spans 402–417; it reads PDKRISIRASDKRIAC. The segment covering 418–428 has biased composition (acidic residues); sequence DEEFSDSEDEG. Residues 429 to 481 show a composition bias toward basic and acidic residues; it reads EGGRRNVADHKKGAKKARIEEDKKETEDKKTDVKEEDKSKDNSGEKTDPKGAK. Residues K439, K452, K458, K462, K478, and K481 each participate in a glycyl lysine isopeptide (Lys-Gly) (interchain with G-Cter in SUMO2) cross-link.

Belongs to the histone deacetylase family. HD type 1 subfamily. Part of the core histone deacetylase (HDAC) complex composed of HDAC1, HDAC2, RBBP4 and RBBP7, the core complex associates with SIN3, SAP18 and SAP30 to form the SIN3 HDAC complex. Component of the nucleosome remodeling and deacetylase (NuRD) repressor complex, composed of core proteins MTA1, MTA2, MTA3, RBBP4, RBBP7, HDAC1, HDAC2, MBD2, MBD3, and peripherally associated proteins CDK2AP1, CDK2AP2, GATAD2A, GATAD2B, CHD3, CHD4 and CHD5. The exact stoichiometry of the NuRD complex is unknown, and some subunits such as MBD2 and MBD3, GATAD2A and GATAD2B, and CHD3, CHD4 and CHD5 define mutually exclusive NuRD complexes. Component of a RCOR/GFI/KDM1A/HDAC complex. Component of a BHC histone deacetylase complex that contains HDAC1, HDAC2, HMG20B, KDM1A, RCOR1 and PHF21A. The BHC complex may also contain ZMYM2, ZNF217, ZMYM3, GSE1 and GTF2I. Part of a complex containing the core histones H2A, H2B, H3 and H4, DEK and unphosphorylated DAXX. Part of a complex containing ATR and CHD4. Forms a heterologous complex at least with YY1. Interacts in the late S-phase of DNA-replication with DNMT1 in the other transcriptional repressor complex composed of DNMT1, DMAP1, PCNA, CAF1. Component of a mSin3A corepressor complex that contains SIN3A, SAP130, SUDS3, ARID4B, HDAC1 and HDAC2. Part of a complex composed of TRIM28, HDAC1, HDAC2 and EHMT2. Part of a complex containing at least CDYL, MIER1, MIER2, HDAC1 and HDAC2. Component of a histone deacetylase complex containing DNTTIP1, ZNF541, HDAC1 and HDAC2. Forms a complex comprising APPL1, RUVBL2, APPL2, CTNNB1 and HDAC1. Interacts directly with GFI1. Interacts directly with GFI1B. Interacts with APEX1; the interaction is not dependent on the acetylated status of APEX1. Interacts with ATR. Interacts with BCL6 (non-acetylated form). Interacts with BEND3. Interacts with CBFA2T3. Interacts with CDK2AP1. Interacts with CHD4. Interacts with CHD5. Interacts with CHFR. Interacts with CRY1. Interacts with DNMT1. Interacts with GATAD2A. Interacts with HCFC1. Interacts with HDAC7. Interacts with HDAC10. Interacts with INSM1. Interacts with KDM4A. Interacts with MACROH2A1 (via the non-histone region). Interacts with MBD3L2. Interacts with MTA1, with a preference for sumoylated MTA1. Interacts with NACC2. Interacts with NRIP1. Interacts with PELP1. Interacts with PIMREG. Interacts with PRDM6. Interacts with PWWP2B Interacts with SAP30. Interacts with SAP30L. Interacts with SETDB1. Interacts with SIX3. Interacts with SMARCAD1. Interacts with SNW1. Interacts with SPHK2. Interacts with SPEN/MINT. Interacts (CK2 phosphorylated form) with SP3. Interacts with SUV39H1. Interacts with TSHZ3 (via its N-terminus). Interacts with ZMYND8. Interacts with ZNF431. Interacts with ZNF263; recruited to the SIX3 promoter along with other proteins involved in chromatin modification and transcriptional corepression where it contributes to transcriptional repression. Identified in a complex with HDAC1, KCTD19, DNTTIP1 and ZNF541. Component of the SIN3B complex, which includes SIN3B, HDAC2, PHF12 and MORF4L1; interacts directly with all subunits. The cofactor is Zn(2+). Ca(2+) serves as cofactor. S-nitrosylated by GAPDH. In neurons, S-nitrosylation at Cys-262 and Cys-274 does not affect enzyme activity, but induces HDAC2 release from chromatin. This in turn increases acetylation of histones surrounding neurotrophin-dependent gene promoters and promotes their transcription. In embryonic cortical neurons, S-Nitrosylation regulates dendritic growth and branching.

It is found in the nucleus. Its subcellular location is the cytoplasm. It catalyses the reaction N(6)-acetyl-L-lysyl-[histone] + H2O = L-lysyl-[histone] + acetate. The catalysed reaction is N(6)-acetyl-L-lysyl-[protein] + H2O = L-lysyl-[protein] + acetate. It carries out the reaction N(6)-(2E)-butenoyl-L-lysyl-[protein] + H2O = (2E)-2-butenoate + L-lysyl-[protein]. The enzyme catalyses N(6)-(2-hydroxyisobutanoyl)-L-lysyl-[protein] + H2O = 2-hydroxy-2-methylpropanoate + L-lysyl-[protein]. It catalyses the reaction N(6)-[(S)-lactoyl]-L-lysyl-[protein] + H2O = (S)-lactate + L-lysyl-[protein]. Inositol tetraphosphate (1D-myo-inositol 1,4,5,6-tetrakisphosphate) may act as an intermolecular glue between HDAC2 and N-Cor repressor complex components. In terms of biological role, histone deacetylase that catalyzes the deacetylation of lysine residues on the N-terminal part of the core histones (H2A, H2B, H3 and H4). Histone deacetylation gives a tag for epigenetic repression and plays an important role in transcriptional regulation, cell cycle progression and developmental events. Histone deacetylases act via the formation of large multiprotein complexes. Forms transcriptional repressor complexes by associating with MAD, SIN3, YY1 and N-COR. Component of a RCOR/GFI/KDM1A/HDAC complex that suppresses, via histone deacetylase (HDAC) recruitment, a number of genes implicated in multilineage blood cell development. Acts as a component of the histone deacetylase NuRD complex which participates in the remodeling of chromatin. Component of the SIN3B complex that represses transcription and counteracts the histone acetyltransferase activity of EP300 through the recognition H3K27ac marks by PHF12 and the activity of the histone deacetylase HDAC2. Also deacetylates non-histone targets: deacetylates TSHZ3, thereby regulating its transcriptional repressor activity. May be involved in the transcriptional repression of circadian target genes, such as PER1, mediated by CRY1 through histone deacetylation. Involved in MTA1-mediated transcriptional corepression of TFF1 and CDKN1A. In addition to protein deacetylase activity, also acts as a protein-lysine deacylase by recognizing other acyl groups: catalyzes removal of (2E)-butenoyl (crotonyl), lactoyl (lactyl) and 2-hydroxyisobutanoyl (2-hydroxyisobutyryl) acyl groups from lysine residues, leading to protein decrotonylation, delactylation and de-2-hydroxyisobutyrylation, respectively. This Mus musculus (Mouse) protein is Histone deacetylase 2.